The chain runs to 392 residues: Na(+)/H(+) antiporter NhaA 2 (392 aa).

11 consecutive transmembrane segments (helical) span residues 20 to 40 (FFAA…AALI), 61 to 81 (LSVS…LVGL), 99 to 119 (ALPG…YVAF), 127 to 147 (IGGW…VLSL), 158 to 178 (IFLS…IALF), 181 to 201 (SDLS…LVAL), 209 to 229 (LLPY…SGIH), 265 to 285 (VAFA…LSGI), 298 to 318 (VALG…ALAI), 336 to 356 (GVAA…ALAF), and 365 to 385 (EVKV…VVVL).

Belongs to the NhaA Na(+)/H(+) (TC 2.A.33) antiporter family.

It is found in the cell inner membrane. The catalysed reaction is Na(+)(in) + 2 H(+)(out) = Na(+)(out) + 2 H(+)(in). Its function is as follows. Na(+)/H(+) antiporter that extrudes sodium in exchange for external protons. The polypeptide is Na(+)/H(+) antiporter NhaA 2 (Pseudomonas syringae pv. syringae (strain B728a)).